We begin with the raw amino-acid sequence, 354 residues long: Methylthioribose-1-phosphate isomerase (354 aa).

Substrate-binding positions include 58 to 60, arginine 101, and glutamine 204; that span reads RGA. The active-site Proton donor is the aspartate 245. 255 to 256 is a binding site for substrate; the sequence is NK.

It belongs to the eIF-2B alpha/beta/delta subunits family. MtnA subfamily.

The enzyme catalyses 5-(methylsulfanyl)-alpha-D-ribose 1-phosphate = 5-(methylsulfanyl)-D-ribulose 1-phosphate. The protein operates within amino-acid biosynthesis; L-methionine biosynthesis via salvage pathway; L-methionine from S-methyl-5-thio-alpha-D-ribose 1-phosphate: step 1/6. Functionally, catalyzes the interconversion of methylthioribose-1-phosphate (MTR-1-P) into methylthioribulose-1-phosphate (MTRu-1-P). In Stenotrophomonas maltophilia (strain R551-3), this protein is Methylthioribose-1-phosphate isomerase.